The primary structure comprises 362 residues: Phosphoserine aminotransferase (362 aa).

Residues Ser-9 and Arg-42 each contribute to the L-glutamate site. Residues 76 to 77, Trp-102, Thr-153, Asp-174, and Gln-197 each bind pyridoxal 5'-phosphate; that span reads GR. Lys-198 bears the N6-(pyridoxal phosphate)lysine mark. 239-240 contacts pyridoxal 5'-phosphate; the sequence is NT.

Belongs to the class-V pyridoxal-phosphate-dependent aminotransferase family. SerC subfamily. Homodimer. Pyridoxal 5'-phosphate serves as cofactor.

The protein resides in the cytoplasm. It catalyses the reaction O-phospho-L-serine + 2-oxoglutarate = 3-phosphooxypyruvate + L-glutamate. The catalysed reaction is 4-(phosphooxy)-L-threonine + 2-oxoglutarate = (R)-3-hydroxy-2-oxo-4-phosphooxybutanoate + L-glutamate. It participates in amino-acid biosynthesis; L-serine biosynthesis; L-serine from 3-phospho-D-glycerate: step 2/3. The protein operates within cofactor biosynthesis; pyridoxine 5'-phosphate biosynthesis; pyridoxine 5'-phosphate from D-erythrose 4-phosphate: step 3/5. Catalyzes the reversible conversion of 3-phosphohydroxypyruvate to phosphoserine and of 3-hydroxy-2-oxo-4-phosphonooxybutanoate to phosphohydroxythreonine. In Enterobacter sp. (strain 638), this protein is Phosphoserine aminotransferase.